We begin with the raw amino-acid sequence, 325 residues long: Tetraacyldisaccharide 4'-kinase (325 aa).

Residue 51 to 58 (VVGGAGKT) coordinates ATP.

It belongs to the LpxK family.

The enzyme catalyses a lipid A disaccharide + ATP = a lipid IVA + ADP + H(+). It functions in the pathway glycolipid biosynthesis; lipid IV(A) biosynthesis; lipid IV(A) from (3R)-3-hydroxytetradecanoyl-[acyl-carrier-protein] and UDP-N-acetyl-alpha-D-glucosamine: step 6/6. Functionally, transfers the gamma-phosphate of ATP to the 4'-position of a tetraacyldisaccharide 1-phosphate intermediate (termed DS-1-P) to form tetraacyldisaccharide 1,4'-bis-phosphate (lipid IVA). The polypeptide is Tetraacyldisaccharide 4'-kinase (Paramagnetospirillum magneticum (strain ATCC 700264 / AMB-1) (Magnetospirillum magneticum)).